The primary structure comprises 253 residues: MTISSFQKQLTTQITNFLARKTISDSSKQAYAYDLKQFVNCLPGRVDQTSLKLYENQLKEWKPSVQKRKRSAVNQFLLYLYQKGELEEFFKLSETAPLPSQQEELEIFDLSSLYEGQEGPGKLACLFILELGLLPSEILELKWEDIDLDFGVVTVAKGSTKRVLRLDGALKELLFGIKNDNSQGLILSKAFTRQWLYKQIQSYVGGCGLSGVTAQALRQQYILRQIEKGTGAFELARLLGLKSPVTLEKYYKT.

Residues lysine 8–tyrosine 81 form the Core-binding (CB) domain. The 161-residue stretch at serine 93–threonine 253 folds into the Tyr recombinase domain. Residues lysine 157 and arginine 218 contribute to the active site. Tyrosine 250 serves as the catalytic O-(3'-phospho-DNA)-tyrosine intermediate.

Belongs to the 'phage' integrase family. XerD-like subfamily.

It localises to the cytoplasm. Putative tyrosine recombinase. Not involved in the cutting and rejoining of the recombining DNA molecules on dif(SL) site. This chain is Tyrosine recombinase XerD-like, found in Streptococcus thermophilus (strain CNRZ 1066).